The sequence spans 383 residues: Erythronate-4-phosphate dehydrogenase (383 aa).

Substrate is bound by residues Ser-45 and Thr-67. Position 147 (Asp-147) interacts with NAD(+). Residue Arg-208 is part of the active site. NAD(+) is bound at residue Asp-232. Glu-237 is a catalytic residue. Catalysis depends on His-254, which acts as the Proton donor. Gly-257 lines the NAD(+) pocket. Substrate is bound at residue Tyr-258.

The protein belongs to the D-isomer specific 2-hydroxyacid dehydrogenase family. PdxB subfamily. Homodimer.

The protein localises to the cytoplasm. It carries out the reaction 4-phospho-D-erythronate + NAD(+) = (R)-3-hydroxy-2-oxo-4-phosphooxybutanoate + NADH + H(+). The protein operates within cofactor biosynthesis; pyridoxine 5'-phosphate biosynthesis; pyridoxine 5'-phosphate from D-erythrose 4-phosphate: step 2/5. Functionally, catalyzes the oxidation of erythronate-4-phosphate to 3-hydroxy-2-oxo-4-phosphonooxybutanoate. This is Erythronate-4-phosphate dehydrogenase from Psychromonas ingrahamii (strain DSM 17664 / CCUG 51855 / 37).